The following is an 867-amino-acid chain: Protein argonaute-3 (867 aa).

The segment at 1–83 (MSGRGNLLSL…IDTLKTDDHT (83 aa)) is necessary and sufficient for interaction with krimp. The segment at 1-289 (MSGRGNLLSL…CDVSHRILCQ (289 aa)) is interaction with papi. 3 positions are modified to symmetric dimethylarginine: arginine 4, arginine 68, and arginine 70. Residues 291-402 (TVLEMLVDLY…LIPELCYLTG (112 aa)) form the PAZ domain. Residues 566-853 (MVVCICHNRR…LAYLIGQSIQ (288 aa)) form the Piwi domain.

It belongs to the argonaute family. Piwi subfamily. Component of the ping-pong piRNA processing (4P) complex consisting of krimp, aub and AGO3. Interacts (via N-terminus when not methylated on arginine residues) with krimp (via non-canonical tudor domain); this interaction leads to symmetrical dimethylation on AGO3 arginine residues and its subsequent dissociation from krimp. Krimp associated AGO3 is mostly free of piRNA binding and the interaction plays an important role in the loading of AGO3 with piRNAs; piRNA binding may stimulate dissociation of the two proteins. May form part of a piRNA processing complex consisting of tud, aub and AGO3. Interacts (when symmetrically dimethylated on arginine residues) with tud. Forms a complex with smg, twin, aub, nos mRNA and piRNAs that target the nos 3'-untranslated region, in early embryos. Interacts (via the N-terminal region when symmetrically methylated on arginine residues) with papi (via C-terminus); this interaction is RNA-independent and may be required for AGO3 localization to the nuage. Interacts with TER94 and tral. In terms of processing, symmetrically dimethylated on Arg-4, Arg-68 and Arg-70, most likely by csul/PRMT5/DART5. Methylation state probably functions as an indicator of its piRNA binding state. In terms of tissue distribution, in ovary, expressed in germline stem cells, germline cyst cells, nurse cells and oocytes during early stages. Also found in the somatic cap cells of the germarium. In testis, expressed in germline stem cells, primary gonial cells and early spermatocytes. No expression detected in the somatic hub cells at the apical tip of the testis (at protein level). Expressed in neurons throughout the adult brain and in the mushroom body subdivision in the peduncle. In the mushroom body, expressed only in gamma and core alpha-beta neurons.

The protein resides in the cytoplasm. Its subcellular location is the perinuclear region. The protein localises to the cytoplasmic ribonucleoprotein granule. Functionally, component of the perinuclear meiotic nuage, a germline-specific subcellular membraneless ribonucleoprotein compartment involved in production of transposable element-repressing Piwi-interacting RNA (piRNA)-induced silencing complexes (piRISCs), which are essential for maintaining germline integrity during oogenesis. Acts via the Piwi-interacting RNA (piRNA) metabolic process, which mediates the repression of transposable elements during meiosis by forming complexes composed of piRNAs and Piwi proteins and governs the methylation and subsequent repression of transposons. Piwi protein that directly binds piRNAs, a class of 24 to 30 nucleotide RNAs that are generated by a Dicer-independent mechanism and are primarily derived from transposons and other repeated sequence elements. Associates predominantly with sense piRNAs that contain adenine at nucleotide 10, but shows no preference for uridine at the 5' end. Shows RNA cleavage or slicer activity. Together with Piwi protein aub recruited to subregions of the perinuclear nuage by krimp, which coordinates their activity in the ping-pong amplification step of secondary piRNA biogenesis. Krimp recruits piRNA bound aub and unbound AGO3, bringing them into close proximity to facilitate the loading onto AGO3 of freshly cut piRNAs generated by aub cleavage of target sequences; krimp recognizes the piRNA loading state of the Piwi proteins via symmetrically dimethylated arginine modification in their N-terminus. Important for asymmetric ping-pong amplification to bias production towards antisense piRNAs capable of silencing transposable elements. In testis, associates with Su(Ste) and AT-chX-1 piRNAs mostly produced from antisense precursors. In the germline, acts to amplify pools of antisense piRNAs, among others Su(Ste), AT-chX-1 and roo, and to limit sense piRNA accumulation. Forms a complex with smg, twin, aub and specific piRNAs that targets nos mRNA (and probably other maternal mRNAS) for deadenylation promoting its decay during early embryogenesis. Involved in transposon silencing in the adult brain. This chain is Protein argonaute-3, found in Drosophila melanogaster (Fruit fly).